A 116-amino-acid chain; its full sequence is MRVKTGTVRRRRHKKILKQAKGFYSGRRKHFRKAKEQLERSLVYAYRDRKQKKREFRKLWITRINAACRLNDISYSRFIHGLSKAGIELDRKILADMAMNEPEAFKAVVEKAKAAL.

Belongs to the bacterial ribosomal protein bL20 family.

In terms of biological role, binds directly to 23S ribosomal RNA and is necessary for the in vitro assembly process of the 50S ribosomal subunit. It is not involved in the protein synthesizing functions of that subunit. In Nitratiruptor sp. (strain SB155-2), this protein is Large ribosomal subunit protein bL20.